The sequence spans 445 residues: Dihydroorotate dehydrogenase (quinone), mitochondrial (445 aa).

Residues 1–16 constitute a mitochondrion transit peptide; that stretch reads MNSGFPRILSKKLFTL. Residues 39-56 form a helical membrane-spanning segment; sequence LLKYTVGIAIGSFAGFYF. FMN contacts are provided by residues 124 to 128 and serine 148; that span reads AGLDK. Substrate is bound at residue lysine 128. 173–177 contributes to the substrate binding site; it reads NRYGF. FMN-binding residues include asparagine 221 and asparagine 251. 251-256 is a substrate binding site; the sequence is NVSSPN. Serine 254 (nucleophile) is an active-site residue. FMN is bound by residues lysine 302 and serine 330. 331-332 contributes to the substrate binding site; that stretch reads NT. FMN is bound by residues glycine 356, glycine 386, and 407–408; that span reads YT.

It belongs to the dihydroorotate dehydrogenase family. Type 2 subfamily. It depends on FMN as a cofactor.

It localises to the mitochondrion inner membrane. The catalysed reaction is (S)-dihydroorotate + a quinone = orotate + a quinol. Its pathway is pyrimidine metabolism; UMP biosynthesis via de novo pathway; orotate from (S)-dihydroorotate (quinone route): step 1/1. Catalyzes the conversion of dihydroorotate to orotate with quinone as electron acceptor. The protein is Dihydroorotate dehydrogenase (quinone), mitochondrial (URA9) of Kluyveromyces lactis (strain ATCC 8585 / CBS 2359 / DSM 70799 / NBRC 1267 / NRRL Y-1140 / WM37) (Yeast).